A 698-amino-acid polypeptide reads, in one-letter code: Cytochrome c oxidase subunit 1 (698 aa).

A helical membrane pass occupies residues 65–85 (INYLYFSMVTGLSGAALATMI). Glu88 is a Ca(2+) binding site. His111 contributes to the Fe(II)-heme a binding site. Helical transmembrane passes span 113-133 (LIMV…NFLI), 147-167 (LNSI…KIGF), 304-324 (ILIL…TNLL), 349-369 (IFLT…AVIM), 395-415 (LFWF…FGFI), 434-454 (IWAI…HMYL), 468-488 (ITIM…LSLV), and 498-518 (FLFS…GMWL). His401 lines the Cu cation pocket. Residues 401–405 (HPEVY) constitute a cross-link (1'-histidyl-3'-tyrosine (His-Tyr)). Residue Tyr405 coordinates O2. Cu cation is bound by residues His450 and His451. The Mg(2+) site is built by His528 and Asp529. Helical transmembrane passes span 533–553 (VVAH…FSGF), 574–594 (LIYY…LGFS), and 613–633 (MSTA…LMIF). His536 lines the heme a3 pocket. His538 lines the Fe(II)-heme a pocket.

Belongs to the heme-copper respiratory oxidase family. Component of the cytochrome c oxidase (complex IV, CIV), a multisubunit enzyme composed of a catalytic core of 3 subunits and several supernumerary subunits. The complex exists as a monomer or a dimer and forms supercomplexes (SCs) in the inner mitochondrial membrane with ubiquinol-cytochrome c oxidoreductase (cytochrome b-c1 complex, complex III, CIII). Heme serves as cofactor. The cofactor is Cu cation.

It is found in the mitochondrion inner membrane. It catalyses the reaction 4 Fe(II)-[cytochrome c] + O2 + 8 H(+)(in) = 4 Fe(III)-[cytochrome c] + 2 H2O + 4 H(+)(out). It participates in energy metabolism; oxidative phosphorylation. Component of the cytochrome c oxidase, the last enzyme in the mitochondrial electron transport chain which drives oxidative phosphorylation. The respiratory chain contains 3 multisubunit complexes succinate dehydrogenase (complex II, CII), ubiquinol-cytochrome c oxidoreductase (cytochrome b-c1 complex, complex III, CIII) and cytochrome c oxidase (complex IV, CIV), that cooperate to transfer electrons derived from NADH and succinate to molecular oxygen, creating an electrochemical gradient over the inner membrane that drives transmembrane transport and the ATP synthase. Cytochrome c oxidase is the component of the respiratory chain that catalyzes the reduction of oxygen to water. Electrons originating from reduced cytochrome c in the intermembrane space (IMS) are transferred via the dinuclear copper A center (CU(A)) of subunit 2 and heme A of subunit 1 to the active site in subunit 1, a binuclear center (BNC) formed by heme A3 and copper B (CU(B)). The BNC reduces molecular oxygen to 2 water molecules using 4 electrons from cytochrome c in the IMS and 4 protons from the mitochondrial matrix. This chain is Cytochrome c oxidase subunit 1 (COI), found in Tetrahymena pyriformis.